The primary structure comprises 436 residues: MRHSIRLTAALLLAFIACFSFPLSAMALEGEYIAIRKEGAGRIALVLGKPLAEGGKASAWSAELDREIREGLAFTGIFNMIPPPLNLFETGGSGKRTLNFGALNSIGAEIFAGGSLASEAGRVKLSMAVYETFGAKPILSKTYSGRPDELRTIAHAFCADLVKLLTGRRSVFGSNIVFVSNRSGFKEIYSCAFDGGSLSQLTRSRSISLTPALSPDGTRLAFTDYTSGRPGLKIMNMADRRISAVRQSGVSIDPGWRSNGEVATTLSFEGDQDIYLVRPDGTLSRKVTSSRGIDLSPSFSPDGTKMAFVSARFGNPQVFILDLGTGQTRRLTYNGNYNTQPSWSPGGDKIAYTTMEKNGEINIFTIRPDGSGATRLTSGARENESPSWSPGGDMIVFTSGRQGQKKLYVMNANGDNQRRLLQMEGEQMQPSWSFIP.

Positions 1 to 27 (MRHSIRLTAALLLAFIACFSFPLSAMA) are cleaved as a signal peptide.

It belongs to the TolB family.

Its subcellular location is the periplasm. This is Protein TolB homolog from Chlorobium luteolum (strain DSM 273 / BCRC 81028 / 2530) (Pelodictyon luteolum).